The chain runs to 371 residues: Cytoplasmic tRNA 2-thiolation protein 1 (371 aa).

This sequence belongs to the TtcA family. CTU1/NCS6/ATPBD3 subfamily.

The protein resides in the cytoplasm. It functions in the pathway tRNA modification; 5-methoxycarbonylmethyl-2-thiouridine-tRNA biosynthesis. Functionally, plays a central role in 2-thiolation of mcm(5)S(2)U at tRNA wobble positions of tRNA(Lys), tRNA(Glu) and tRNA(Gln). Directly binds tRNAs and probably acts by catalyzing adenylation of tRNAs, an intermediate required for 2-thiolation. It is unclear whether it acts as a sulfurtransferase that transfers sulfur from thiocarboxylated URM1 onto the uridine of tRNAs at wobble position. Prior mcm(5) tRNA modification by the elongator complex is required for 2-thiolation. May also be involved in protein urmylation. The polypeptide is Cytoplasmic tRNA 2-thiolation protein 1 (Kluyveromyces lactis (strain ATCC 8585 / CBS 2359 / DSM 70799 / NBRC 1267 / NRRL Y-1140 / WM37) (Yeast)).